We begin with the raw amino-acid sequence, 90 residues long: MPIEPGQEVIFVVPIRKIKKRVPRWKRAPRAAKFVREWIARHAKAEEVKLEPAVNEKLWERGAEKPPNKLRVKVVVEVVDGKRVAKVSLA.

This sequence belongs to the eukaryotic ribosomal protein eL31 family.

This Thermococcus gammatolerans (strain DSM 15229 / JCM 11827 / EJ3) protein is Large ribosomal subunit protein eL31.